The primary structure comprises 139 residues: uncharacterized protein (139 aa).

This is an uncharacterized protein from Aquifex aeolicus (strain VF5).